A 224-amino-acid polypeptide reads, in one-letter code: Polysialic acid transport ATP-binding protein KpsT (224 aa).

One can recognise an ABC transporter domain in the interval 2–223; sequence IKIENLTKSY…EYKMYQDLDI (222 aa). 38 to 45 is a binding site for ATP; that stretch reads GRNGAGKS.

The protein belongs to the ABC transporter superfamily.

The protein localises to the cell inner membrane. In terms of biological role, putative ATP-binding protein, and an energy coupling component for the transport of polysialic acid across the cytoplasmic membrane. The protein is Polysialic acid transport ATP-binding protein KpsT (kpsT) of Escherichia coli.